A 347-amino-acid polypeptide reads, in one-letter code: Two pore potassium channel a (347 aa).

The segment covering 1 to 11 (MDDNSIQQSLL) has biased composition (polar residues). The interval 1-49 (MDDNSIQQSLLADNPNVLQRKPSEGVNRFRRCRSTPSTDPLQGPPEKGS) is disordered. Residues 1–65 (MDDNSIQQSL…LFKEMRPSFR (65 aa)) lie on the Cytoplasmic side of the membrane. Residues 66-86 (LVGLLLFIYLLVGVLAFYAVM) form a helical membrane-spanning segment. The pore-forming intramembrane region spans 99-118 (DALYFCVVTMTTVGYGDLVP). Residues 125–145 (LLACAFVFMGMAVVALFVSKV) traverse the membrane as a helical segment. The Cytoplasmic segment spans residues 146–183 (ADYLVEKQEVLFFKALHTNLKGGETKMLRAIETNRIKY). A helical membrane pass occupies residues 184-204 (KFYTNALLLVLSIISGTVFLW). Positions 213–232 (DSFYCVCATITTLGYGDKSF) form an intramembrane region, pore-forming. A helical transmembrane segment spans residues 239-259 (VFAVFWIITSTIIMAQFFMYL). Residues 260–347 (AEIYTERRQK…YDLTLAQSAQ (88 aa)) are Cytoplasmic-facing. EF-hand domains are found at residues 276–311 (LTRK…ELGK) and 315–347 (EEIS…QSAQ). Residues D289, D291, D293, Q295, E300, D328, D330, S332, T334, and D339 each coordinate Ca(2+).

Belongs to the two pore domain potassium channel (TC 1.A.1.7) family. In terms of assembly, homodimer.

Its subcellular location is the vacuole membrane. Functionally, highly selective inward-rectifying potassium channel that is specifically located in the tonoplast of large vacuoles. Functions independently of the voltage difference across the membrane. The chain is Two pore potassium channel a (TPKA) from Oryza sativa subsp. japonica (Rice).